Consider the following 234-residue polypeptide: Phosphoribosylaminoimidazole-succinocarboxamide synthase (234 aa).

It belongs to the SAICAR synthetase family.

The catalysed reaction is 5-amino-1-(5-phospho-D-ribosyl)imidazole-4-carboxylate + L-aspartate + ATP = (2S)-2-[5-amino-1-(5-phospho-beta-D-ribosyl)imidazole-4-carboxamido]succinate + ADP + phosphate + 2 H(+). It functions in the pathway purine metabolism; IMP biosynthesis via de novo pathway; 5-amino-1-(5-phospho-D-ribosyl)imidazole-4-carboxamide from 5-amino-1-(5-phospho-D-ribosyl)imidazole-4-carboxylate: step 1/2. This chain is Phosphoribosylaminoimidazole-succinocarboxamide synthase, found in Streptococcus agalactiae serotype III (strain NEM316).